A 318-amino-acid polypeptide reads, in one-letter code: NADH-ubiquinone oxidoreductase chain 1 (318 aa).

8 helical membrane-spanning segments follow: residues 2–22 (FLMN…FLTL), 70–90 (MFIL…IPMP), 100–120 (LGVL…LWSG), 136–156 (VAQT…IMML), 171–191 (HLWL…STLA), 231–251 (IIMM…NPLF), 253–273 (ELFT…FLWV), and 294–314 (LPLT…LAGI).

The protein belongs to the complex I subunit 1 family.

It localises to the mitochondrion inner membrane. The enzyme catalyses a ubiquinone + NADH + 5 H(+)(in) = a ubiquinol + NAD(+) + 4 H(+)(out). Its function is as follows. Core subunit of the mitochondrial membrane respiratory chain NADH dehydrogenase (Complex I) that is believed to belong to the minimal assembly required for catalysis. Complex I functions in the transfer of electrons from NADH to the respiratory chain. The immediate electron acceptor for the enzyme is believed to be ubiquinone. The polypeptide is NADH-ubiquinone oxidoreductase chain 1 (MT-ND1) (Priodontes maximus (Giant armadillo)).